Here is a 162-residue protein sequence, read N- to C-terminus: uncharacterized protein (162 aa).

The chain crosses the membrane as a helical span at residues 6-24 (SYLISIFYIILITSETTAF).

It is found in the membrane. This is an uncharacterized protein from Caenorhabditis elegans.